The sequence spans 79 residues: Alpha-actitoxin-Ms11a-4 (79 aa).

A signal peptide spans 1-23 (MKVLVAVLVFALLMCMFVDIAES). The propeptide occupies 24-46 (RRRDNPEYPSGLRYDEEMGVFKR). 3 disulfide bridges follow: Cys-47/Cys-61, Cys-54/Cys-67, and Cys-60/Cys-76. Tyrosine amide is present on Tyr-78.

It localises to the secreted. The protein resides in the nematocyst. In terms of biological role, alpha-toxins act on postsynaptic membranes, they bind to the nicotinic acetylcholine receptors (nAChR) and thus inhibit them. This toxin very weakly competes with alpha-bungarotoxin for binding to orthosteric sites on muscle-type T.carlifornicus (IC(50)=14.95 uM) and human alpha-7/CHRNA7 nAChRs (IC(50)&gt;45 uM). The chain is Alpha-actitoxin-Ms11a-4 from Metridium senile (Brown sea anemone).